The following is a 233-amino-acid chain: Charged multivesicular body protein 4c (233 aa).

Disordered stretches follow at residues M1–E24 and Q173–T233. An intramolecular interaction with C-terminus region spans residues M1 to V153. The stretch at L125–I183 forms a coiled coil. The interval G154 to T233 is intramolecular interaction with N-terminus. The segment covering S204–Q216 has biased composition (low complexity). A Phosphoserine; by AURKB modification is found at S210.

This sequence belongs to the SNF7 family. As to quaternary structure, probable core component of the endosomal sorting required for transport complex III (ESCRT-III). ESCRT-III components are thought to multimerize to form a flat lattice on the perimeter membrane of the endosome. Several assembly forms of ESCRT-III may exist that interact and act sequentially. Self-associates. Interacts with CHMP2A. Interacts with CHMP4A. Interacts with CHMP4B. Interacts with CHMP6. Interacts with VPS4A. Interacts with PDCD6IP; the interaction is direct. Phosphorylated at Ser-210 by AURKB during cytokinesis: together with ZFYVE19/ANCHR, phosphorylated CHMP4C retains abscission-competent VPS4 (VPS4A and/or VPS4B) at the midbody ring until abscission checkpoint signaling is terminated at late cytokinesis. In terms of tissue distribution, expressed in heart, spleen and kidney.

Its subcellular location is the cytoplasm. It is found in the cytosol. It localises to the late endosome membrane. The protein localises to the midbody. The protein resides in the midbody ring. Functionally, probable core component of the endosomal sorting required for transport complex III (ESCRT-III) which is involved in multivesicular bodies (MVBs) formation and sorting of endosomal cargo proteins into MVBs. MVBs contain intraluminal vesicles (ILVs) that are generated by invagination and scission from the limiting membrane of the endosome and mostly are delivered to lysosomes enabling degradation of membrane proteins, such as stimulated growth factor receptors, lysosomal enzymes and lipids. The MVB pathway appears to require the sequential function of ESCRT-O, -I,-II and -III complexes. ESCRT-III proteins mostly dissociate from the invaginating membrane before the ILV is released. The ESCRT machinery also functions in topologically equivalent membrane fission events, such as the terminal stages of cytokinesis and the budding of enveloped viruses (HIV-1 and other lentiviruses). Key component of the cytokinesis checkpoint, a process required to delay abscission to prevent both premature resolution of intercellular chromosome bridges and accumulation of DNA damage: upon phosphorylation by AURKB, together with ZFYVE19/ANCHR, retains abscission-competent VPS4 (VPS4A and/or VPS4B) at the midbody ring until abscission checkpoint signaling is terminated at late cytokinesis. Deactivation of AURKB results in dephosphorylation of CHMP4C followed by its dissociation from ANCHR and VPS4 and subsequent abscission. ESCRT-III proteins are believed to mediate the necessary vesicle extrusion and/or membrane fission activities, possibly in conjunction with the AAA ATPase VPS4. Involved in HIV-1 p6- and p9-dependent virus release. CHMP4A/B/C are required for the exosomal release of SDCBP, CD63 and syndecan. The sequence is that of Charged multivesicular body protein 4c (CHMP4C) from Homo sapiens (Human).